A 544-amino-acid polypeptide reads, in one-letter code: MAKEIFYSDDARNRLYEGVRKLNDAVKVTMGPRGRNVLIQKSFGAPSITKDGVSVAKEVELKDTIENMGASLVREVASKTNDQAGDGTTTATVLAHAIFKEGLRNVTAGANPIEVKRGMDKEVAALIDELKNIAKKVSGSKEIAQIATISANSDESIGKLIADAMEKVGKDGVITVEEAKSIEDELNVVEGMQFDRGYLSPYFITNAEKMQVELSNPFILLFDKKITNLKDLLPVLEQIQKTGKPLLIVAEDIEGEALATLVVNKLRGVLNISAVKAPGFGDRRKAMLEDIAILTGGEVISEELGRTLESATLEDLGQASSVVIDKDNTTIVNGAGEKSAIDARINQIKAQIAETTSDYDKEKLQERLAKLSGGVAVIKVGAATETEMKEKKDRVDDALSATRAAVEEGIVVGGGSALILASKRVKLDLSGDEAIGAEIVRRALRAPLRQIAENAGFDAGVVTNAVEVSSDVNYGFNAVSGEYVNMFEAGIIDPVKVERVALQNAVSVASLLLTTEATISELKEDKPMPAMPDMGGMGGMGGMM.

Residues 29–32, Lys-50, 86–90, Gly-414, 477–479, and Asp-493 each bind ATP; these read TMGP, DGTTT, and NAV.

The protein belongs to the chaperonin (HSP60) family. Forms a cylinder of 14 subunits composed of two heptameric rings stacked back-to-back. Interacts with the co-chaperonin GroES.

The protein localises to the cytoplasm. It carries out the reaction ATP + H2O + a folded polypeptide = ADP + phosphate + an unfolded polypeptide.. Together with its co-chaperonin GroES, plays an essential role in assisting protein folding. The GroEL-GroES system forms a nano-cage that allows encapsulation of the non-native substrate proteins and provides a physical environment optimized to promote and accelerate protein folding. This Campylobacter curvus (strain 525.92) protein is Chaperonin GroEL.